The sequence spans 659 residues: UvrABC system protein B (659 aa).

The Helicase ATP-binding domain occupies 25-414; the sequence is EGVRRGAREQ…PSLVVEQIVR (390 aa). Position 38-45 (38-45) interacts with ATP; sequence GATGTGKT. A Beta-hairpin motif is present at residues 91 to 114; the sequence is YYDYYQPEAYIPTTDTYIEKDALI. The region spanning 431–597 is the Helicase C-terminal domain; that stretch reads QIDDLYAEIR…TIVKPVRDVI (167 aa). The region spanning 620–655 is the UVR domain; sequence PKVVAKLRKEMMQAAKDLDFERAAEIRDIIFELEKK.

This sequence belongs to the UvrB family. In terms of assembly, forms a heterotetramer with UvrA during the search for lesions. Interacts with UvrC in an incision complex.

It localises to the cytoplasm. The UvrABC repair system catalyzes the recognition and processing of DNA lesions. A damage recognition complex composed of 2 UvrA and 2 UvrB subunits scans DNA for abnormalities. Upon binding of the UvrA(2)B(2) complex to a putative damaged site, the DNA wraps around one UvrB monomer. DNA wrap is dependent on ATP binding by UvrB and probably causes local melting of the DNA helix, facilitating insertion of UvrB beta-hairpin between the DNA strands. Then UvrB probes one DNA strand for the presence of a lesion. If a lesion is found the UvrA subunits dissociate and the UvrB-DNA preincision complex is formed. This complex is subsequently bound by UvrC and the second UvrB is released. If no lesion is found, the DNA wraps around the other UvrB subunit that will check the other stand for damage. The chain is UvrABC system protein B from Symbiobacterium thermophilum (strain DSM 24528 / JCM 14929 / IAM 14863 / T).